Here is a 217-residue protein sequence, read N- to C-terminus: MTHSAWHDEIKQVLPKDYYRRVNRFLDEVYATGVVYPPRDNVFKALQVTPLEETRVLILGQDPYHGPLQAQGLSFSVPDSIPAPPSLQNILEELAADIGVRSHHDLSSWAEQGVLLLNACLTVPEGRANGHAGLIWEPFTDAVIKVLNAKDRPVVFVLWGAYARRKKALITNPIHHVIESPHPSPLSAYRGFFGSKPFSRANAILEKEGLGQIDWLR.

The active-site Proton acceptor is Asp62.

Belongs to the uracil-DNA glycosylase (UDG) superfamily. UNG family.

It localises to the cytoplasm. The enzyme catalyses Hydrolyzes single-stranded DNA or mismatched double-stranded DNA and polynucleotides, releasing free uracil.. Functionally, excises uracil residues from the DNA which can arise as a result of misincorporation of dUMP residues by DNA polymerase or due to deamination of cytosine. The chain is Uracil-DNA glycosylase from Streptococcus equi subsp. zooepidemicus (strain H70).